Reading from the N-terminus, the 131-residue chain is Holo-[acyl-carrier-protein] synthase (131 aa).

Mg(2+) contacts are provided by Asp8 and Glu59.

It belongs to the P-Pant transferase superfamily. AcpS family. Mg(2+) is required as a cofactor.

The protein localises to the cytoplasm. The catalysed reaction is apo-[ACP] + CoA = holo-[ACP] + adenosine 3',5'-bisphosphate + H(+). Functionally, transfers the 4'-phosphopantetheine moiety from coenzyme A to a Ser of acyl-carrier-protein. The sequence is that of Holo-[acyl-carrier-protein] synthase from Orientia tsutsugamushi (strain Ikeda) (Rickettsia tsutsugamushi).